The sequence spans 356 residues: 16-methoxy-2,3-dihydro-3-hydroxytabersonine synthase (356 aa).

Residues cysteine 49, histidine 71, cysteine 102, cysteine 105, cysteine 108, cysteine 116, and cysteine 162 each coordinate Zn(2+). 187–192 (GLGAVG) contributes to the NAD(+) binding site.

The protein belongs to the zinc-containing alcohol dehydrogenase family. Requires Zn(2+) as cofactor. As to expression, expressed in leaf epidermis.

It catalyses the reaction (3R)-3-hydroxy-16-methoxy-2,3-dihydrotabersonine + A = (3R)-1,2-didehydro-3-hydroxy-16-methoxy-2,3-dihydrotabersonine + AH2. The enzyme catalyses (3R)-3-hydroxy-2,3-dihydrotabersonine + A = (3R)-1,2-didehydro-3-hydroxy-2,3-dihydrotabersonine + AH2. It participates in alkaloid biosynthesis; vindoline biosynthesis. Functionally, converts the unstable imine alcohols produced by CYP71D1V2/T3O into 3-hydroxy-16-methoxy-2,3-dihydrotabersonine or 3-hydroxy-2,3-dihydrotabersonine. The protein is 16-methoxy-2,3-dihydro-3-hydroxytabersonine synthase of Catharanthus roseus (Madagascar periwinkle).